A 383-amino-acid chain; its full sequence is ATP phosphoribosyltransferase regulatory subunit (383 aa).

The protein belongs to the class-II aminoacyl-tRNA synthetase family. HisZ subfamily. In terms of assembly, heteromultimer composed of HisG and HisZ subunits.

It localises to the cytoplasm. Its pathway is amino-acid biosynthesis; L-histidine biosynthesis; L-histidine from 5-phospho-alpha-D-ribose 1-diphosphate: step 1/9. Required for the first step of histidine biosynthesis. May allow the feedback regulation of ATP phosphoribosyltransferase activity by histidine. The chain is ATP phosphoribosyltransferase regulatory subunit from Paraburkholderia phytofirmans (strain DSM 17436 / LMG 22146 / PsJN) (Burkholderia phytofirmans).